Here is a 377-residue protein sequence, read N- to C-terminus: Nucleosome assembly protein 1;2 (377 aa).

Residues 26-80 adopt a coiled-coil conformation; that stretch reads VNVLKNKLHDLTGKHSNVTESLSPNVRKRVEALREIQTEHDELEAKFFEERAALE. Positions 47–62 match the Nuclear export signal motif; that stretch reads LSPNVRKRVEALREIQ. Residues 223 to 228 carry the Nuclear localization signal motif; the sequence is KKKPKK. Residues 298–377 are disordered; the sequence is EAAEDDYAEL…GERPPECKQQ (80 aa). The span at 299–342 shows a compositional bias: acidic residues; the sequence is AAEDDYAELEDDEDEDDDEEDDEDEDEEEEDEEDDEDEEEDEDE. Cys-374 carries the post-translational modification Cysteine methyl ester. Cys-374 carries S-farnesyl cysteine lipidation. A propeptide spans 375 to 377 (removed in mature form); the sequence is KQQ.

It belongs to the nucleosome assembly protein (NAP) family. Binds preferentially histone H1 in vitro. Interacts with CYCB1;1.

It localises to the nucleus. The protein resides in the cytoplasm. May modulate chromatin structure by regulation of nucleosome assembly/disassembly. Could function together with B-type cyclins in the regulation of microtubule dynamics. The polypeptide is Nucleosome assembly protein 1;2 (NAP1;2) (Nicotiana tabacum (Common tobacco)).